The primary structure comprises 559 residues: Subtelomeric hrmA-associated cluster protein AFUB_079030 (559 aa).

4 disordered regions span residues alanine 163–glutamate 190, arginine 298–alanine 351, serine 427–serine 451, and phenylalanine 525–valine 559. Low complexity predominate over residues glycine 169–glycine 179. Composition is skewed to basic and acidic residues over residues lysine 180–proline 189 and serine 300–arginine 325. Residues asparagine 336–glutamate 346 show a composition bias toward polar residues.

In terms of biological role, part of the subtelomeric hrmA-associated cluster (HAC) containing genes that alter the hyphal surface (such as reduced total chitin or increased beta-glucan exposure) and perturb inter-hyphal interactions within the developing biofilms, resulting in a loss of vertically aligned polarized growing filaments. Consequently, this hypoxia-typic morphotype (called H-MORPH) with altered biofilm architecture leads to increased hypoxia fitness, increased host inflammation, rapid disease progression, and mortality in a murine model of invasive aspergillosis. This Aspergillus fumigatus (strain CBS 144.89 / FGSC A1163 / CEA10) (Neosartorya fumigata) protein is Subtelomeric hrmA-associated cluster protein AFUB_079030.